We begin with the raw amino-acid sequence, 657 residues long: Hemocyanin B chain (657 aa).

Residues cysteine 93 and cysteine 98 are joined by a disulfide bond. N-linked (GlcNAc...) asparagine glycosylation is present at asparagine 167. 6 residues coordinate Cu cation: histidine 194, histidine 198, histidine 224, histidine 344, histidine 348, and histidine 384. Cystine bridges form between cysteine 483-cysteine 502 and cysteine 562-cysteine 609.

Belongs to the tyrosinase family. Hemocyanin subfamily. As to quaternary structure, hexamer of a number of different chains, of which A, B, and C have been identified. Hemolymph.

Its subcellular location is the secreted. The protein resides in the extracellular space. Hemocyanins are copper-containing oxygen carriers occurring freely dissolved in the hemolymph of many mollusks and arthropods. The protein is Hemocyanin B chain of Panulirus interruptus (California spiny lobster).